Here is a 224-residue protein sequence, read N- to C-terminus: LexA repressor (224 aa).

The H-T-H motif DNA-binding region spans 31 to 51 (RAEIAAELGFKSANAAEEHLQ). Residues Ser142 and Lys179 each act as for autocatalytic cleavage activity in the active site.

It belongs to the peptidase S24 family. Homodimer.

The enzyme catalyses Hydrolysis of Ala-|-Gly bond in repressor LexA.. Its function is as follows. Represses a number of genes involved in the response to DNA damage (SOS response), including recA and lexA. In the presence of single-stranded DNA, RecA interacts with LexA causing an autocatalytic cleavage which disrupts the DNA-binding part of LexA, leading to derepression of the SOS regulon and eventually DNA repair. The protein is LexA repressor of Verminephrobacter eiseniae (strain EF01-2).